The primary structure comprises 476 residues: Aspartyl/glutamyl-tRNA(Asn/Gln) amidotransferase subunit B (476 aa).

Belongs to the GatB/GatE family. GatB subfamily. Heterotrimer of A, B and C subunits.

It catalyses the reaction L-glutamyl-tRNA(Gln) + L-glutamine + ATP + H2O = L-glutaminyl-tRNA(Gln) + L-glutamate + ADP + phosphate + H(+). The catalysed reaction is L-aspartyl-tRNA(Asn) + L-glutamine + ATP + H2O = L-asparaginyl-tRNA(Asn) + L-glutamate + ADP + phosphate + 2 H(+). Allows the formation of correctly charged Asn-tRNA(Asn) or Gln-tRNA(Gln) through the transamidation of misacylated Asp-tRNA(Asn) or Glu-tRNA(Gln) in organisms which lack either or both of asparaginyl-tRNA or glutaminyl-tRNA synthetases. The reaction takes place in the presence of glutamine and ATP through an activated phospho-Asp-tRNA(Asn) or phospho-Glu-tRNA(Gln). The sequence is that of Aspartyl/glutamyl-tRNA(Asn/Gln) amidotransferase subunit B from Latilactobacillus sakei subsp. sakei (strain 23K) (Lactobacillus sakei subsp. sakei).